We begin with the raw amino-acid sequence, 396 residues long: Tryptophan synthase beta chain (396 aa).

At lysine 86 the chain carries N6-(pyridoxal phosphate)lysine.

It belongs to the TrpB family. Tetramer of two alpha and two beta chains. Pyridoxal 5'-phosphate serves as cofactor.

It carries out the reaction (1S,2R)-1-C-(indol-3-yl)glycerol 3-phosphate + L-serine = D-glyceraldehyde 3-phosphate + L-tryptophan + H2O. The protein operates within amino-acid biosynthesis; L-tryptophan biosynthesis; L-tryptophan from chorismate: step 5/5. Its function is as follows. The beta subunit is responsible for the synthesis of L-tryptophan from indole and L-serine. The polypeptide is Tryptophan synthase beta chain (Vibrio vulnificus (strain CMCP6)).